A 744-amino-acid chain; its full sequence is 1,4-alpha-glucan branching enzyme GlgB (744 aa).

The tract at residues 1 to 23 (MSGPEDPADRRHGEVPAPRRDIP) is disordered. A compositionally biased stretch (basic and acidic residues) spans 7 to 23 (PADRRHGEVPAPRRDIP). Residue D424 is the Nucleophile of the active site. E476 serves as the catalytic Proton donor.

Belongs to the glycosyl hydrolase 13 family. GlgB subfamily. In terms of assembly, monomer.

The catalysed reaction is Transfers a segment of a (1-&gt;4)-alpha-D-glucan chain to a primary hydroxy group in a similar glucan chain.. The protein operates within glycan biosynthesis; glycogen biosynthesis. In terms of biological role, catalyzes the formation of the alpha-1,6-glucosidic linkages in glycogen by scission of a 1,4-alpha-linked oligosaccharide from growing alpha-1,4-glucan chains and the subsequent attachment of the oligosaccharide to the alpha-1,6 position. The chain is 1,4-alpha-glucan branching enzyme GlgB from Nocardia farcinica (strain IFM 10152).